The chain runs to 344 residues: Deoxyhypusine hydroxylase (344 aa).

2 HEAT-like PBS-type repeats span residues 81–107 (LKHELAYCLGQTANGAAIPYLTAVLED) and 115–140 (RHEAAEALGALGDVASLGVLKRFRDR). Residues His-83, Glu-84, His-116, and Glu-117 each coordinate Fe cation. Residues 169-188 (EKLRASDFSSVDPAPPTAQG) are disordered. HEAT-like PBS-type repeat units lie at residues 210–240 (KRYRAMFALRDLASPPDLPTAVPAVLALAKG), 248–274 (FRHEIAFVFGQLAHPASIPALTEALSN), and 281–308 (VRHEAAEALGSLGDEEGVEETLRKFLHD). Fe cation is bound by residues His-250, Glu-251, His-283, and Glu-284.

Belongs to the deoxyhypusine hydroxylase family. The cofactor is Fe(2+).

The protein resides in the cytoplasm. It localises to the nucleus. The enzyme catalyses [eIF5A protein]-deoxyhypusine + AH2 + O2 = [eIF5A protein]-hypusine + A + H2O. It functions in the pathway protein modification; eIF5A hypusination. Catalyzes the hydroxylation of the N(6)-(4-aminobutyl)-L-lysine intermediate to form hypusine, an essential post-translational modification only found in mature eIF-5A factor. This is Deoxyhypusine hydroxylase from Chaetomium globosum (strain ATCC 6205 / CBS 148.51 / DSM 1962 / NBRC 6347 / NRRL 1970) (Soil fungus).